The primary structure comprises 284 residues: MEMO1 family protein Mevan_0697 (284 aa).

This sequence belongs to the MEMO1 family.

The polypeptide is MEMO1 family protein Mevan_0697 (Methanococcus vannielii (strain ATCC 35089 / DSM 1224 / JCM 13029 / OCM 148 / SB)).